The primary structure comprises 1897 residues: Spectinabilin polyketide synthase system protein NorA (1897 aa).

The Ketosynthase family 3 (KS3) domain maps to 112 to 536; sequence EEPIAIVGMG…GTNAHIILEQ (425 aa). Catalysis depends on for beta-ketoacyl synthase activity residues cysteine 283, histidine 418, and histidine 458. The segment at 538–563 is disordered; sequence APEPERPHAPEADGEPRPLPWPVSGH. The segment covering 540-553 has biased composition (basic and acidic residues); that stretch reads EPERPHAPEADGEP. The region spanning 644–962 is the Malonyl-CoA:ACP transacylase (MAT) domain; it reads FVFPGQGSQW…VAEAHVHGVA (319 aa). Residues 1012 to 1139 form an N-terminal hotdog fold region; it reads HPLLGAAIPL…GTLAPGGGHP (128 aa). In terms of domain architecture, PKS/mFAS DH spans 1012–1289; the sequence is HPLLGAAIPL…MRPVTAEALH (278 aa). Histidine 1045 serves as the catalytic Proton acceptor; for dehydratase activity. Residues 1113 to 1152 are disordered; it reads SRPEDAGADEPWTRHAEGTLAPGGGHPRQDPGPWPPTGAR. The interval 1151-1289 is C-terminal hotdog fold; the sequence is AREIDLDDCY…MRPVTAEALH (139 aa). Aspartate 1211 functions as the Proton donor; for dehydratase activity in the catalytic mechanism. The region spanning 1494 to 1671 is the Ketoreductase (KR) domain; the sequence is GTVLVTGGLG…GVSMGWGMWA (178 aa). One can recognise a Carrier domain in the interval 1777–1852; the sequence is ALLLGVVRGH…ALSRYLRTLL (76 aa). Serine 1812 carries the O-(pantetheine 4'-phosphoryl)serine modification. Residues 1854-1873 are disordered; sequence PDPAPAPTAPDGQPGPDQAD. The span at 1862 to 1871 shows a compositional bias: low complexity; the sequence is APDGQPGPDQ.

As to quaternary structure, the spectinabilin polyketide synthase complex is composed of 4 proteins, NorA, NorA', NorB and NorC. The complex comprises 6 modules with a total of 28 catalytic domains catalyzing 7 chain elongations. NorA comprises one module, NorA' two modules, NorB one module and NorC two modules. Pantetheine 4'-phosphate is required as a cofactor.

The catalysed reaction is 4-nitrobenzoyl-CoA + 6 (S)-methylmalonyl-CoA + malonyl-CoA + 6 NADPH + 12 H(+) = demethyldeoxyspectinabilin + 7 CO2 + 6 NADP(+) + 8 CoA + 5 H2O. It participates in antibiotic biosynthesis. The protein operates within polyketide biosynthesis. Its function is as follows. Component of a type I modular polyketide synthase (PKS) that generates the backbone of the antibiotic spectinabilin (also known as neoaureothin), a nitroaryl-substituted polyketide metabolite. This PKS system accepts the unusual starter unit 4-nitrobenzoyl-CoA and extends it by 6 molecules of (S)-methylmalonyl-CoA and a single molecule of malonyl-CoA. The first module, NorA, is used twice in an iterative fashion. This is Spectinabilin polyketide synthase system protein NorA from Streptomyces orinoci (Streptoverticillium orinoci).